We begin with the raw amino-acid sequence, 540 residues long: Chaperonin GroEL (540 aa).

ATP contacts are provided by residues 30–33, K51, 87–91, G415, 479–481, and D495; these read TLAP, DGTTT, and NAA.

Belongs to the chaperonin (HSP60) family. Forms a cylinder of 14 subunits composed of two heptameric rings stacked back-to-back. Interacts with the co-chaperonin GroES.

It localises to the cytoplasm. It carries out the reaction ATP + H2O + a folded polypeptide = ADP + phosphate + an unfolded polypeptide.. Together with its co-chaperonin GroES, plays an essential role in assisting protein folding. The GroEL-GroES system forms a nano-cage that allows encapsulation of the non-native substrate proteins and provides a physical environment optimized to promote and accelerate protein folding. This chain is Chaperonin GroEL, found in Methylovorus sp. (strain SS1 / DSM 11726).